Consider the following 692-residue polypeptide: Glycine--tRNA ligase beta subunit (692 aa).

The protein belongs to the class-II aminoacyl-tRNA synthetase family. As to quaternary structure, tetramer of two alpha and two beta subunits.

Its subcellular location is the cytoplasm. The enzyme catalyses tRNA(Gly) + glycine + ATP = glycyl-tRNA(Gly) + AMP + diphosphate. This chain is Glycine--tRNA ligase beta subunit, found in Pseudoalteromonas atlantica (strain T6c / ATCC BAA-1087).